Consider the following 633-residue polypeptide: MTNSNLRTENHFDYVKITLASPERVMSWGQRTLPNGQVVGEVTKPETINYRTLKPEMDGLFCEKIFGPSKDWECHCGKYKRVRHRGIVCERCGVEVTESRVRRHRMGFIKLAAPVSHVWYLKGIPSYVAILLDMPLRDVEQIVYFNCYVVLDQGDHKDLKYKQLLTEDEWLEIEDEIYAEDSTIENEPVVGIGAEALQQLLEDLDLKEIAETLREEITGSKGQKRAKLIKRLRVIDNFIATNARPEWMVLDAIPVIPPDLRPMVQLDGGRFATSDLNDLYRRVINRNNRLARLQEILAPEIIVRNEKRMLQEAVDALVDNGRRGRTVVGANNRALKSLSDIIEGKQGRFRQNLLGKRVDYSGRSVIVVGPKLKMHQCGLPKEMAIELFQPFVIHRLIRQNIVNNIKAAKKLIQRADDEVMQVLQEVIDGHPILLNRAPTLHRLGIQAFEPKLVDGRAIQLHPLVCPAFNADFDGDQMAVHVPLAIESQTEARMLMLASNNILSPATGEPIVTPSQDMVLGSYYLTAIQPEASKPDFGDQSKTFASLDDVINAFEDKRIKLHDWVWVRFNGEVDDDDHGEPSHSETLEDGTRIEQWNLRRDRLDEQGALISRFVLTTVGRVVMNHTIIDAVAIA.

Zn(2+) contacts are provided by cysteine 74, cysteine 76, cysteine 89, and cysteine 92. Mg(2+) contacts are provided by aspartate 471, aspartate 473, and aspartate 475.

The protein belongs to the RNA polymerase beta' chain family. RpoC1 subfamily. As to quaternary structure, in cyanobacteria the RNAP catalytic core is composed of 2 alpha, 1 beta, 1 beta', 1 gamma and 1 omega subunit. When a sigma factor is associated with the core the holoenzyme is formed, which can initiate transcription. It depends on Mg(2+) as a cofactor. Zn(2+) serves as cofactor.

The enzyme catalyses RNA(n) + a ribonucleoside 5'-triphosphate = RNA(n+1) + diphosphate. Its function is as follows. DNA-dependent RNA polymerase catalyzes the transcription of DNA into RNA using the four ribonucleoside triphosphates as substrates. This chain is DNA-directed RNA polymerase subunit gamma, found in Prochlorococcus marinus (strain MIT 9211).